The primary structure comprises 270 residues: MKCFLVSRIDMPGALDCASRMKTALERAGHTVVLDPDTASMLGGSGHSINKVSADMAVVIGGDGTILRTVQQLHEQIPIIGINHGEVGFLADLEPEEAGAFVRSLAPGFDVEERMRLSLWNEEDHLGDALNEGLIVTTRPAKMLRFSILVDGRLTEQFRSDGILVSTPTGSTAYAMSAGGPIVDPRIEGFLLVPLAPYLLSSRPHLISSSRRLEIRLESSKPAKLVIDGQNTVELGSAVSLVIQKAASPARFIDVHRNFFEKVDRKLRKL.

The active-site Proton acceptor is D63. NAD(+) contacts are provided by residues 63 to 64 (DG), R68, 131 to 132 (NE), K142, R159, D161, 172 to 177 (TAYAMS), A196, and Q230.

This sequence belongs to the NAD kinase family. It depends on a divalent metal cation as a cofactor.

It localises to the cytoplasm. It catalyses the reaction NAD(+) + ATP = ADP + NADP(+) + H(+). Involved in the regulation of the intracellular balance of NAD and NADP, and is a key enzyme in the biosynthesis of NADP. Catalyzes specifically the phosphorylation on 2'-hydroxyl of the adenosine moiety of NAD to yield NADP. This Methanoregula boonei (strain DSM 21154 / JCM 14090 / 6A8) protein is NAD kinase.